The primary structure comprises 110 residues: Putative membrane protein insertion efficiency factor (110 aa).

This sequence belongs to the UPF0161 family.

Its subcellular location is the cell inner membrane. In terms of biological role, could be involved in insertion of integral membrane proteins into the membrane. This chain is Putative membrane protein insertion efficiency factor, found in Campylobacter hominis (strain ATCC BAA-381 / DSM 21671 / CCUG 45161 / LMG 19568 / NCTC 13146 / CH001A).